A 466-amino-acid chain; its full sequence is Glycylpeptide N-tetradecanoyltransferase (466 aa).

Positions 1–21 (MDNENNKNTKNSQQDSSFSEG) are disordered. The segment covering 8–19 (NTKNSQQDSSFS) has biased composition (polar residues). Ser-17 is modified (phosphoserine). Residues 51 to 54 (FKFW), 185 to 187 (LCI), and 193 to 197 (SKRLT) each bind tetradecanoyl-CoA. Ile-466 functions as the Proton acceptor; via carboxylate in the catalytic mechanism.

It belongs to the NMT family. Monomer.

Its subcellular location is the cytoplasm. It carries out the reaction N-terminal glycyl-[protein] + tetradecanoyl-CoA = N-tetradecanoylglycyl-[protein] + CoA + H(+). In terms of biological role, adds a myristoyl group to the N-terminal glycine residue of certain cellular proteins. This is Glycylpeptide N-tetradecanoyltransferase (nmt1) from Schizosaccharomyces pombe (strain 972 / ATCC 24843) (Fission yeast).